The following is a 163-amino-acid chain: Putative pre-16S rRNA nuclease (163 aa).

It belongs to the YqgF nuclease family.

Its subcellular location is the cytoplasm. Could be a nuclease involved in processing of the 5'-end of pre-16S rRNA. This is Putative pre-16S rRNA nuclease from Rhodopseudomonas palustris (strain BisA53).